A 311-amino-acid chain; its full sequence is Ketoisovalerate oxidoreductase subunit VorB (311 aa).

As to quaternary structure, heterotetramer of one alpha, one beta, one delta and one gamma chain.

The catalysed reaction is 3-methyl-2-oxobutanoate + 2 oxidized [2Fe-2S]-[ferredoxin] + CoA = 2-methylpropanoyl-CoA + 2 reduced [2Fe-2S]-[ferredoxin] + CO2 + H(+). The sequence is that of Ketoisovalerate oxidoreductase subunit VorB (vorB) from Pyrococcus furiosus (strain ATCC 43587 / DSM 3638 / JCM 8422 / Vc1).